A 151-amino-acid chain; its full sequence is uncharacterized protein (151 aa).

This is an uncharacterized protein from Mycoplasma genitalium (strain ATCC 33530 / DSM 19775 / NCTC 10195 / G37) (Mycoplasmoides genitalium).